Reading from the N-terminus, the 123-residue chain is Large ribosomal subunit protein bL12 (123 aa).

The tract at residues 96 to 123 (NVKEGVSKEEAEGLKKSLEEAGATVELK) is disordered. Residues 100 to 114 (GVSKEEAEGLKKSLE) are compositionally biased toward basic and acidic residues.

The protein belongs to the bacterial ribosomal protein bL12 family. In terms of assembly, homodimer. Part of the ribosomal stalk of the 50S ribosomal subunit. Forms a multimeric L10(L12)X complex, where L10 forms an elongated spine to which 2 to 4 L12 dimers bind in a sequential fashion. Binds GTP-bound translation factors.

Forms part of the ribosomal stalk which helps the ribosome interact with GTP-bound translation factors. Is thus essential for accurate translation. The chain is Large ribosomal subunit protein bL12 from Flavobacterium johnsoniae (strain ATCC 17061 / DSM 2064 / JCM 8514 / BCRC 14874 / CCUG 350202 / NBRC 14942 / NCIMB 11054 / UW101) (Cytophaga johnsonae).